The primary structure comprises 259 residues: UPF0246 protein PSPA7_1607 (259 aa).

Belongs to the UPF0246 family.

This chain is UPF0246 protein PSPA7_1607, found in Pseudomonas paraeruginosa (strain DSM 24068 / PA7) (Pseudomonas aeruginosa (strain PA7)).